The following is a 215-amino-acid chain: Cytochrome b6 (215 aa).

A helical membrane pass occupies residues 32–52; sequence IFYCLGGITLTCFLVQVATGF. Cysteine 35 contributes to the heme c binding site. Heme b-binding residues include histidine 86 and histidine 100. The next 3 helical transmembrane spans lie at 90–110, 116–136, and 186–206; these read ASMMVLMMILHVFRVYLTGGF, LTWVTGVVLAVLTASFGVTGY, and LHTFVLPLLTAVFMLMHFPMI. Heme b contacts are provided by histidine 187 and histidine 202.

The protein belongs to the cytochrome b family. PetB subfamily. The 4 large subunits of the cytochrome b6-f complex are cytochrome b6, subunit IV (17 kDa polypeptide, PetD), cytochrome f and the Rieske protein, while the 4 small subunits are PetG, PetL, PetM and PetN. The complex functions as a dimer. Heme b serves as cofactor. It depends on heme c as a cofactor.

The protein localises to the plastid. It is found in the chloroplast thylakoid membrane. Functionally, component of the cytochrome b6-f complex, which mediates electron transfer between photosystem II (PSII) and photosystem I (PSI), cyclic electron flow around PSI, and state transitions. In Solanum bulbocastanum (Wild potato), this protein is Cytochrome b6.